The primary structure comprises 551 residues: uncharacterized protein (551 aa).

Polar residues predominate over residues 1–11 (MRRVSLPNQLN). 2 disordered regions span residues 1–22 (MRRV…TRGE) and 523–551 (CDPT…QAFH). A compositionally biased stretch (basic and acidic residues) spans 12–22 (ETRRRSPTRGE). The span at 537–551 (QQPQQQQQQQQQAFH) shows a compositional bias: low complexity.

It to Synechocystis PCC 6803 sll0335 and to M.tuberculosis Rv2567.

This is an uncharacterized protein from Mycobacterium bovis (strain ATCC BAA-935 / AF2122/97).